Here is a 249-residue protein sequence, read N- to C-terminus: Sugar fermentation stimulation protein homolog (249 aa).

It belongs to the SfsA family.

The sequence is that of Sugar fermentation stimulation protein homolog from Rhizobium rhizogenes (strain K84 / ATCC BAA-868) (Agrobacterium radiobacter).